The chain runs to 314 residues: 4-hydroxy-3-methylbut-2-enyl diphosphate reductase (314 aa).

C12 is a binding site for [4Fe-4S] cluster. Residues H43 and H81 each coordinate (2E)-4-hydroxy-3-methylbut-2-enyl diphosphate. 2 residues coordinate dimethylallyl diphosphate: H43 and H81. Residues H43 and H81 each coordinate isopentenyl diphosphate. C103 is a [4Fe-4S] cluster binding site. Residue H131 coordinates (2E)-4-hydroxy-3-methylbut-2-enyl diphosphate. H131 contacts dimethylallyl diphosphate. H131 contacts isopentenyl diphosphate. The Proton donor role is filled by E133. T170 provides a ligand contact to (2E)-4-hydroxy-3-methylbut-2-enyl diphosphate. C198 is a [4Fe-4S] cluster binding site. Positions 226, 228, and 271 each coordinate (2E)-4-hydroxy-3-methylbut-2-enyl diphosphate. S226, N228, and S271 together coordinate dimethylallyl diphosphate. Residues S226, N228, and S271 each coordinate isopentenyl diphosphate.

This sequence belongs to the IspH family. [4Fe-4S] cluster serves as cofactor.

The enzyme catalyses isopentenyl diphosphate + 2 oxidized [2Fe-2S]-[ferredoxin] + H2O = (2E)-4-hydroxy-3-methylbut-2-enyl diphosphate + 2 reduced [2Fe-2S]-[ferredoxin] + 2 H(+). It carries out the reaction dimethylallyl diphosphate + 2 oxidized [2Fe-2S]-[ferredoxin] + H2O = (2E)-4-hydroxy-3-methylbut-2-enyl diphosphate + 2 reduced [2Fe-2S]-[ferredoxin] + 2 H(+). The protein operates within isoprenoid biosynthesis; dimethylallyl diphosphate biosynthesis; dimethylallyl diphosphate from (2E)-4-hydroxy-3-methylbutenyl diphosphate: step 1/1. Its pathway is isoprenoid biosynthesis; isopentenyl diphosphate biosynthesis via DXP pathway; isopentenyl diphosphate from 1-deoxy-D-xylulose 5-phosphate: step 6/6. Its function is as follows. Catalyzes the conversion of 1-hydroxy-2-methyl-2-(E)-butenyl 4-diphosphate (HMBPP) into a mixture of isopentenyl diphosphate (IPP) and dimethylallyl diphosphate (DMAPP). Acts in the terminal step of the DOXP/MEP pathway for isoprenoid precursor biosynthesis. The polypeptide is 4-hydroxy-3-methylbut-2-enyl diphosphate reductase (Bacillus pumilus (strain SAFR-032)).